The chain runs to 416 residues: Phakinin (416 aa).

The segment at 1–48 (MSERRVAMDLPSGSNASMPLQRHRVSSLRGTRSPSSLDSPPASRTSAV) is disordered. Serine 2 carries the post-translational modification N-acetylserine. Residues 2-115 (SERRVAMDLP…HATAEDLGGC (114 aa)) are head. Phosphoserine occurs at positions 27, 33, 36, and 91. Positions 28–48 (LRGTRSPSSLDSPPASRTSAV) are enriched in polar residues. In terms of domain architecture, IF rod spans 105–416 (NHATAEDLGG…HALLDREESN (312 aa)). Coiled-coil stretches lie at residues 199–240 (FRKA…SLSR) and 314–391 (LAAA…ERAH). Positions 397 to 416 (GQLQKDVASYHALLDREESN) are tail.

It belongs to the intermediate filament family. In terms of assembly, part of a complex required for lens intermediate filament formation composed of BFSP1, BFSP2, and CRYAA. Found in a complex composed of PPL (via C-terminal linker domain), BFSP1 and BFSP2 in the retinal lens. Within the complex interacts with PPL (via C-terminal linker domain) and with BFSP1. Identified in a complex that contains VIM, EZR, AHNAK, BFSP1, BFSP2, ANK2, PLEC, PRX and spectrin. Interacts with LGSN. Interacts with VIM. Expressed in the deep and shallow cortices of the retina lens (at protein level).

Its subcellular location is the cell membrane. It localises to the cytoplasm. It is found in the cytoskeleton. The protein resides in the cell cortex. Functionally, required for the correct formation of lens intermediate filaments as part of a complex composed of BFSP1, BFSP2 and CRYAA. Plays a role in maintenance of retinal lens optical clarity. In Rattus norvegicus (Rat), this protein is Phakinin.